The sequence spans 355 residues: MRNVKGLFSYMTKTKSFYISIIVIIFIIFIVNRMGPRNYNYKQIGTEINCVKHKVDEQRYLLFPMITILYKYGLGNQLFEVFSLLGSAQTLNRTAIFNADDDILQSKLDLLQKQVPQVAARIISIPIEIAESTRYLFLPACCHYQFPSLFSCERSKFLVIDGQYFQSFKYFSAIDSLIRKLLKPPIDEEIILKKMIGRKDELRFKNCVHIRRGDYVNDFDHAETSSYFTIRAIDYVHTLHPGLVYLISDDPKWVRKQIAEHLDYHDDVKIMETPINAAIRDLYFSQAHCDSVLITAPSSTFGWWIGYMSKNQSNVYYRDIQETDDMVKYKMVEEDFFPPTWKKLGMSRNGSIISK.

Residues 1–15 (MRNVKGLFSYMTKTK) are Cytoplasmic-facing. Residues 16–36 (SFYISIIVIIFIIFIVNRMGP) traverse the membrane as a helical; Signal-anchor for type II membrane protein segment. Topologically, residues 37–355 (RNYNYKQIGT…MSRNGSIISK (319 aa)) are lumenal. Residues N92, N311, and N349 are each glycosylated (N-linked (GlcNAc...) asparagine).

Belongs to the glycosyltransferase 11 family. Expression is restricted to the 20 intestinal cells in larvae and adult.

It is found in the golgi apparatus. The protein resides in the golgi stack membrane. The protein operates within protein modification; protein glycosylation. Its function is as follows. Selectively catalyzes the addition of fucose in alpha 1-2 linkage to Gal-beta-(1-&gt;4)-Xyl-beta-R, Gal-beta-(1-&gt;6)-GlcNAc-R, Gal-beta-(1-&gt;3)-Gal-beta-(1-&gt;4)-Glc and Gal-beta-(1-&gt;3)-Gal-beta-(1-&gt;4)-Xyl-R acceptors but not Gal-beta-(1-&gt;3)-GlcNAc-beta-(1-&gt;3)-Gal-beta-(1-&gt;4)-Glc. Unlike in mammals, unable to fucosylate Gal-beta-(1-&gt;4)-Glc-beta-R. The protein is Galactoside 2-alpha-L-fucosyltransferase of Caenorhabditis elegans.